Reading from the N-terminus, the 333-residue chain is Cathepsin M (333 aa).

The signal sequence occupies residues 1-15 (MTSAIFLAMLCLGMA). A propeptide spans 16-113 (LPSPAPDPIL…KSVQKRLSVN (98 aa)) (activation peptide). 2 disulfide bridges follow: C135/C178 and C169/C211. C138 is an active-site residue. N-linked (GlcNAc...) asparagine glycans are attached at residues N217, N221, and N268. An intrachain disulfide couples C269 to C322. Active-site residues include H276 and N300.

It belongs to the peptidase C1 family. Placenta.

It is found in the lysosome. The sequence is that of Cathepsin M (Ctsm) from Mus musculus (Mouse).